The chain runs to 630 residues: YTH domain-containing family protein 1 (630 aa).

Disordered regions lie at residues 38 to 113 (DMTQ…YMQQ), 160 to 183 (YYPQGAQFPNHGPMPQNSMLAGPY), and 200 to 241 (QVGD…QSGH). A compositionally biased stretch (polar residues) spans 70–102 (PGQQQQHQYGSPPNTNGNAQPMPQAHGNNTMNS). Positions 382 to 590 (EKYFILKSLT…SVGRKLTGLF (209 aa)) constitute a YTH domain.

It belongs to the YTHDF family. YTHDF1 subfamily.

It localises to the cytoplasm. It is found in the P-body. In terms of biological role, specifically recognizes and binds N6-methyladenosine (m6A)-containing mRNAs, and regulates their stability. M6A is a modification present at internal sites of mRNAs and some non-coding RNAs and plays a role in mRNA stability and processing. Plays a role in pathogenicity towards plant host. This is YTH domain-containing family protein 1 from Pyricularia oryzae (strain 70-15 / ATCC MYA-4617 / FGSC 8958) (Rice blast fungus).